The primary structure comprises 289 residues: ATP synthase gamma chain (289 aa).

This sequence belongs to the ATPase gamma chain family. In terms of assembly, F-type ATPases have 2 components, CF(1) - the catalytic core - and CF(0) - the membrane proton channel. CF(1) has five subunits: alpha(3), beta(3), gamma(1), delta(1), epsilon(1). CF(0) has three main subunits: a, b and c.

It localises to the cell inner membrane. Functionally, produces ATP from ADP in the presence of a proton gradient across the membrane. The gamma chain is believed to be important in regulating ATPase activity and the flow of protons through the CF(0) complex. This Acinetobacter baumannii (strain AB307-0294) protein is ATP synthase gamma chain.